The sequence spans 104 residues: Large ribosomal subunit protein bL21 (104 aa).

It belongs to the bacterial ribosomal protein bL21 family. As to quaternary structure, part of the 50S ribosomal subunit. Contacts protein L20.

In terms of biological role, this protein binds to 23S rRNA in the presence of protein L20. The protein is Large ribosomal subunit protein bL21 of Moorella thermoacetica (strain ATCC 39073 / JCM 9320).